Consider the following 91-residue polypeptide: MKEKQTTTISLTYRKVKVYFVNTMNIESWCTVELNSKQDWTRADRKHDPNGFNSSVFKGASNQHQESSLDFATAEPEFHRERRHFPEKSEY.

Residues 42–91 form a disordered region; the sequence is RADRKHDPNGFNSSVFKGASNQHQESSLDFATAEPEFHRERRHFPEKSEY. Polar residues predominate over residues 51–70; sequence GFNSSVFKGASNQHQESSLD. The segment covering 76–91 has biased composition (basic and acidic residues); the sequence is PEFHRERRHFPEKSEY.

This sequence belongs to the SPATA45 family.

The protein is Protein SPATA45 homolog of Nematostella vectensis (Starlet sea anemone).